The following is a 364-amino-acid chain: 4-hydroxythreonine-4-phosphate dehydrogenase (364 aa).

Substrate is bound by residues H148 and T149. A divalent metal cation contacts are provided by H177, H216, and H301. Substrate is bound by residues K309, N318, and R327.

It belongs to the PdxA family. As to quaternary structure, homodimer. Zn(2+) serves as cofactor. Requires Mg(2+) as cofactor. It depends on Co(2+) as a cofactor.

The protein resides in the cytoplasm. It catalyses the reaction 4-(phosphooxy)-L-threonine + NAD(+) = 3-amino-2-oxopropyl phosphate + CO2 + NADH. The protein operates within cofactor biosynthesis; pyridoxine 5'-phosphate biosynthesis; pyridoxine 5'-phosphate from D-erythrose 4-phosphate: step 4/5. In terms of biological role, catalyzes the NAD(P)-dependent oxidation of 4-(phosphooxy)-L-threonine (HTP) into 2-amino-3-oxo-4-(phosphooxy)butyric acid which spontaneously decarboxylates to form 3-amino-2-oxopropyl phosphate (AHAP). This Campylobacter jejuni subsp. jejuni serotype O:23/36 (strain 81-176) protein is 4-hydroxythreonine-4-phosphate dehydrogenase.